Consider the following 342-residue polypeptide: Surface presentation of antigens protein SpaS (342 aa).

6 helical membrane-spanning segments follow: residues 28 to 48 (LTTV…FSLS), 70 to 90 (FFAV…FCVL), 133 to 153 (EFFK…FFWI), 158 to 178 (IIFS…GRLF), 181 to 201 (IILF…VIEF), and 260 to 280 (HIAI…ISLI).

This sequence belongs to the type III secretion exporter family.

It localises to the cell inner membrane. Its function is as follows. Required for surface presentation of invasion plasmid antigens. Could play a role in preserving the translocation competence of the ipa antigens. Required for invasion and for secretion of the three ipa proteins. This chain is Surface presentation of antigens protein SpaS (spaS), found in Shigella flexneri.